Consider the following 156-residue polypeptide: Ribosome maturation factor RimP (156 aa).

The protein belongs to the RimP family.

The protein localises to the cytoplasm. Its function is as follows. Required for maturation of 30S ribosomal subunits. In Halalkalibacterium halodurans (strain ATCC BAA-125 / DSM 18197 / FERM 7344 / JCM 9153 / C-125) (Bacillus halodurans), this protein is Ribosome maturation factor RimP.